A 392-amino-acid chain; its full sequence is Monooxygenase AgnR1 (392 aa).

The N-terminal stretch at 1-20 (MSAPQKCAAVVVGAGPAGLA) is a signal peptide. N-linked (GlcNAc...) asparagine glycosylation is present at asparagine 134.

In terms of biological role, monooxygenase; part of the gene cluster that mediates the biosynthesis of agnestins, dihydroxy-xanthone metabolites. The pathway begins with the assembly and cyclization of atrochrysone thioester by the non-reducing polyketide synthase Agnpks1. The atrochrysone carboxyl ACP thioesterase AgnL7 then breaks the thioester bond and releases the atrochrysone carboxylic acid as the first enzyme-free intermediate. The decarboxylase AgnL1 then catalyzes the concerted decarboxylation-elimination required to convert atochrysone carboxylic acid into emodin anthrone, which is further oxidized to emodin by the anthrone oxygenase AgnL2. Emodin then undergoes reduction catalyzed by the oxidoreductase AgnL4 to yield the dihydroquinone tautomer which is the substrate for reduction by the short chain dehydrogenase AgnL6 reduction to produce hydroxyketone, followed by AgnL8 dehydration and likely spontaneous autoxidation to chrysophanol. Baeyer-Villiger oxidation by the oxidase AgnL3 leads to monodictyphenone via cleavage of the C-10/C-10a bond of chrysophanol. Alternative cleavage at the C-4a/C-10 bond of chrysophanol also leads to the formation some cephalone F. Further conversion to agnestins A and B, requires reduction to dihydro-monodictyphenone, oxidation to agnestin C probably via an epoxide, and rearrangement to either agnestin A or agnestin B directly, although agnestin A or agnestin B can also interconvert. Within the cluster, AgnR1 is the only unassigned oxidoreductase present which could be involved in this conversion. However, AgnR1 seems not to be involved in this step, and thus genes involved in the proposed oxidation/reduction may be located elsewhere on the genome. Further agnestin A derivatives are probably formed by spontaneous decarboxylations, dehydrations and methanolysis reactions. This is Monooxygenase AgnR1 from Paecilomyces divaricatus (Penicillium divaricatum).